The chain runs to 276 residues: Formamidopyrimidine-DNA glycosylase (276 aa).

The active-site Schiff-base intermediate with DNA is Pro-2. The active-site Proton donor is Glu-3. The active-site Proton donor; for beta-elimination activity is the Lys-58. Residues His-94, Arg-112, and Arg-157 each contribute to the DNA site. The FPG-type zinc-finger motif lies at 242 to 276; sequence FVYDRAGEPCRVCGAPIRQIVQGQRSTYFCPNCQR. The active-site Proton donor; for delta-elimination activity is Arg-266.

This sequence belongs to the FPG family. As to quaternary structure, monomer. It depends on Zn(2+) as a cofactor.

The catalysed reaction is Hydrolysis of DNA containing ring-opened 7-methylguanine residues, releasing 2,6-diamino-4-hydroxy-5-(N-methyl)formamidopyrimidine.. It carries out the reaction 2'-deoxyribonucleotide-(2'-deoxyribose 5'-phosphate)-2'-deoxyribonucleotide-DNA = a 3'-end 2'-deoxyribonucleotide-(2,3-dehydro-2,3-deoxyribose 5'-phosphate)-DNA + a 5'-end 5'-phospho-2'-deoxyribonucleoside-DNA + H(+). Functionally, involved in base excision repair of DNA damaged by oxidation or by mutagenic agents. Acts as a DNA glycosylase that recognizes and removes damaged bases. Has a preference for oxidized purines, such as 7,8-dihydro-8-oxoguanine (8-oxoG). Has AP (apurinic/apyrimidinic) lyase activity and introduces nicks in the DNA strand. Cleaves the DNA backbone by beta-delta elimination to generate a single-strand break at the site of the removed base with both 3'- and 5'-phosphates. This is Formamidopyrimidine-DNA glycosylase from Burkholderia pseudomallei (strain 1710b).